We begin with the raw amino-acid sequence, 159 residues long: Transcription elongation factor A protein-like 1 (159 aa).

The segment at Met-1–Arg-120 is disordered. A compositionally biased stretch (basic and acidic residues) spans Lys-17–Pro-34. Residues Gln-37–Leu-54 are compositionally biased toward acidic residues. Basic and acidic residues-rich tracts occupy residues Ser-64–Glu-80 and His-95–Gly-119.

The protein belongs to the TFS-II family. TFA subfamily.

Its subcellular location is the nucleus. Its function is as follows. May be involved in transcriptional regulation. Modulates various viral and cellular promoters in a promoter context-dependent manner. Does not bind DNA directly. This chain is Transcription elongation factor A protein-like 1, found in Bos taurus (Bovine).